A 59-amino-acid polypeptide reads, in one-letter code: Ferredoxin-2 (59 aa).

4Fe-4S ferredoxin-type domains are found at residues 3 to 32 (YSVI…LQNG) and 33 to 59 (KAVP…AIVE). The [4Fe-4S] cluster site is built by Cys-12, Cys-15, Cys-18, Cys-22, Cys-42, Cys-45, Cys-48, and Cys-52.

In terms of assembly, homodimer. [4Fe-4S] cluster is required as a cofactor.

It localises to the periplasm. Functionally, ferredoxins are iron-sulfur proteins that transfer electrons in a wide variety of metabolic reactions. This is Ferredoxin-2 from Desulfomicrobium norvegicum (strain DSM 1741 / NCIMB 8310) (Desulfovibrio baculatus (strain Norway 4)).